The primary structure comprises 217 residues: Phosphatase MT3486 (217 aa).

D9 serves as the catalytic Nucleophile.

This sequence belongs to the HAD-like hydrolase superfamily.

Functionally, able to hydrolyze geranyl diphosphate (GPP), farnesyl diphosphate (FPP) and geranylgeranyl diphosphate (GGPP) to respectively yield geraniol, farnesol and geranylgeraniol. This is Phosphatase MT3486 from Mycobacterium tuberculosis (strain CDC 1551 / Oshkosh).